The chain runs to 405 residues: MSTTGPLDATLIRDVAVATATKASYDMSDTLYSYLPKVDQFYIPEWLTMQFIANNLISFTPLFSYGTTIISIEKCKTALGFSIDICATMLIASILRISYYLITPYEITLLRQSLVMIFIQLILLRTSLKYRPDEYKYQNLTDVESLSHLIHDIWFEFFSCINRPKFLSEDWKNLIKSLSFTNLLKFSFKIFLAFFYKILKFFDPNFKRIGAFWQWDDDKNFWRFLALFATVQILVTFFISNILNWDSLAQGLGSIIGSLGLLVESLLPLPQIAILYKLKSVQGFKLILLVSWLCGDTLKITYLIFGAKNISALFVIFALFQMSLDFYIGGQYIYYRYYYPKLRHQHHPNDSNSPSDEDESEMYELDLFNTLQKDVEKALKQDSNDTSDSPQDDQVGKSQAQAVTL.

The Cytoplasmic portion of the chain corresponds to 1-51 (MSTTGPLDATLIRDVAVATATKASYDMSDTLYSYLPKVDQFYIPEWLTMQF). A helical membrane pass occupies residues 52-72 (IANNLISFTPLFSYGTTIISI). Residues 73–76 (EKCK) lie on the Lumenal side of the membrane. The helical transmembrane segment at 77–97 (TALGFSIDICATMLIASILRI) threads the bilayer. Residues 98–103 (SYYLIT) are Cytoplasmic-facing. The helical transmembrane segment at 104 to 124 (PYEITLLRQSLVMIFIQLILL) threads the bilayer. Over 125-177 (RTSLKYRPDEYKYQNLTDVESLSHLIHDIWFEFFSCINRPKFLSEDWKNLIKS) the chain is Lumenal. A helical transmembrane segment spans residues 178 to 198 (LSFTNLLKFSFKIFLAFFYKI). Residues 199–223 (LKFFDPNFKRIGAFWQWDDDKNFWR) are Cytoplasmic-facing. A helical transmembrane segment spans residues 224-244 (FLALFATVQILVTFFISNILN). Over 245-254 (WDSLAQGLGS) the chain is Lumenal. The PQ-loop domain occupies 252 to 309 (LGSIIGSLGLLVESLLPLPQIAILYKLKSVQGFKLILLVSWLCGDTLKITYLIFGAKN). The helical transmembrane segment at 255-275 (IIGSLGLLVESLLPLPQIAIL) threads the bilayer. Topologically, residues 276 to 283 (YKLKSVQG) are cytoplasmic. The chain crosses the membrane as a helical span at residues 284 to 306 (FKLILLVSWLCGDTLKITYLIFG). Over 307–312 (AKNISA) the chain is Lumenal. The chain crosses the membrane as a helical span at residues 313–335 (LFVIFALFQMSLDFYIGGQYIYY). The Cytoplasmic portion of the chain corresponds to 336–405 (RYYYPKLRHQ…GKSQAQAVTL (70 aa)). The tract at residues 379–405 (LKQDSNDTSDSPQDDQVGKSQAQAVTL) is disordered. The segment covering 396 to 405 (GKSQAQAVTL) has biased composition (polar residues).

Interacts with NEO1.

The protein resides in the golgi apparatus membrane. Its subcellular location is the late endosome membrane. Phospholipid scramblase that transports phosphatidylserine (PS) and phosphatidylethalonamine (PE) bidirectionally from one leaflet to the other of the phospholipid bilayer to at least partially collapse the membrane asymmetry established by NEO1 and other flippases. The PS scramblase activity has been disputed. Functions in the trafficking pathway from endosomes to the trans-Golgi network (TGN). The chain is Scramblase ANY1 from Saccharomyces cerevisiae (strain ATCC 204508 / S288c) (Baker's yeast).